The following is a 1167-amino-acid chain: DNA-directed RNA polymerase subunit beta (1167 aa).

It belongs to the RNA polymerase beta chain family. In terms of assembly, the RNAP catalytic core consists of 2 alpha, 1 beta, 1 beta' and 1 omega subunit. When a sigma factor is associated with the core the holoenzyme is formed, which can initiate transcription.

It catalyses the reaction RNA(n) + a ribonucleoside 5'-triphosphate = RNA(n+1) + diphosphate. Functionally, DNA-dependent RNA polymerase catalyzes the transcription of DNA into RNA using the four ribonucleoside triphosphates as substrates. In Treponema denticola (strain ATCC 35405 / DSM 14222 / CIP 103919 / JCM 8153 / KCTC 15104), this protein is DNA-directed RNA polymerase subunit beta.